The chain runs to 420 residues: UDP-N-acetylglucosamine 1-carboxyvinyltransferase 1 (420 aa).

A phosphoenolpyruvate-binding site is contributed by 22 to 23 (KN). Arginine 91 is a UDP-N-acetyl-alpha-D-glucosamine binding site. Catalysis depends on cysteine 115, which acts as the Proton donor. A 2-(S-cysteinyl)pyruvic acid O-phosphothioketal modification is found at cysteine 115. UDP-N-acetyl-alpha-D-glucosamine contacts are provided by residues 120 to 124 (RPMDL), aspartate 303, and valine 325.

Belongs to the EPSP synthase family. MurA subfamily.

It is found in the cytoplasm. The enzyme catalyses phosphoenolpyruvate + UDP-N-acetyl-alpha-D-glucosamine = UDP-N-acetyl-3-O-(1-carboxyvinyl)-alpha-D-glucosamine + phosphate. It participates in cell wall biogenesis; peptidoglycan biosynthesis. In terms of biological role, cell wall formation. Adds enolpyruvyl to UDP-N-acetylglucosamine. This Carboxydothermus hydrogenoformans (strain ATCC BAA-161 / DSM 6008 / Z-2901) protein is UDP-N-acetylglucosamine 1-carboxyvinyltransferase 1.